Reading from the N-terminus, the 362-residue chain is Sphingosine 1-phosphate receptor 1 (362 aa).

At 1 to 25 the chain is on the extracellular side; it reads MDDLIARHYNFTGKFRKVHKDPGLK. N-linked (GlcNAc...) asparagine glycosylation occurs at Asn-10. The chain crosses the membrane as a helical span at residues 26–47; sequence ADSVVFIIVCCFIILENVLVLL. Residues 48 to 61 lie on the Cytoplasmic side of the membrane; it reads TIWRTKKFHKPMYY. The chain crosses the membrane as a helical span at residues 62–83; sequence FIGNLALSDLLAGVVYTANILL. Residues 84–95 lie on the Extracellular side of the membrane; it reads SGANTYKLTPTQ. Residues 96 to 117 traverse the membrane as a helical segment; the sequence is WFFREGSMFVALAASVFSLLAI. 99 to 100 serves as a coordination point for sphing-4-enine 1-phosphate; sequence RE. Residues 118-139 are Cytoplasmic-facing; it reads AIERHLTMLKMKLHNNGKTCRV. The helical transmembrane segment at 140–161 threads the bilayer; that stretch reads FMLISTVWFIAAILGGLPVMGW. Over 162 to 175 the chain is Extracellular; the sequence is NCIDSMNNCSTVLP. An intrachain disulfide couples Cys-163 to Cys-170. Asn-169 carries N-linked (GlcNAc...) asparagine glycosylation. Residues 176 to 203 traverse the membrane as a helical segment; that stretch reads LYHKAYILFCTTVFSVILMAIVILYARI. Topologically, residues 204-238 are cytoplasmic; that stretch reads YALVRTRSRKLVFRKVANGRGSNKSSEKSMALLKT. Residues 239-259 form a helical membrane-spanning segment; it reads VIIVLSCFIACWAPLFILLLL. 246–250 lines the sphing-4-enine 1-phosphate pocket; that stretch reads FIACW. The Extracellular segment spans residues 260-270; the sequence is DVACQTLTCSI. The cysteines at positions 263 and 268 are disulfide-linked. The chain crosses the membrane as a helical span at residues 271-291; it reads LYKAEWFLALAVLNSAMNPLI. Over 292 to 362 the chain is Cytoplasmic; it reads YTLTSNEMRR…VSSGNITSSS (71 aa). Cys-309 carries S-palmitoyl cysteine lipidation. Positions 328 to 362 are disordered; it reads FSRSKSDNSSHPNKDEPEYSPRETIVSSGNITSSS. Residues 329-348 are compositionally biased toward basic and acidic residues; the sequence is SRSKSDNSSHPNKDEPEYSP. Residues 352–362 show a composition bias toward polar residues; that stretch reads IVSSGNITSSS.

Belongs to the G-protein coupled receptor 1 family.

It is found in the cell membrane. Functionally, G-protein coupled receptor for the bioactive lysosphingolipid sphingosine 1-phosphate (S1P) that seems to be coupled to the G(i) subclass of heteromeric G proteins. Signaling leads to the activation of RAC1, SRC, PTK2/FAK1 and MAP kinases. Plays an important role in cell migration, probably via its role in the reorganization of the actin cytoskeleton and the formation of lamellipodia in response to stimuli that increase the activity of the sphingosine kinase SPHK1. Required for normal chemotaxis toward sphingosine 1-phosphate. The polypeptide is Sphingosine 1-phosphate receptor 1 (s1pr1) (Danio rerio (Zebrafish)).